We begin with the raw amino-acid sequence, 85 residues long: Small ribosomal subunit protein bS16 (85 aa).

The protein belongs to the bacterial ribosomal protein bS16 family.

This is Small ribosomal subunit protein bS16 from Clostridium novyi (strain NT).